The following is a 703-amino-acid chain: Elongation factor G (703 aa).

The 284-residue stretch at 9–292 (ERTRNIGIMA…AVVDYLPGPL (284 aa)) folds into the tr-type G domain. Residues 18 to 25 (AHIDAGKT), 91 to 95 (DTPGH), and 145 to 148 (NKMD) contribute to the GTP site.

The protein belongs to the TRAFAC class translation factor GTPase superfamily. Classic translation factor GTPase family. EF-G/EF-2 subfamily.

The protein resides in the cytoplasm. Its function is as follows. Catalyzes the GTP-dependent ribosomal translocation step during translation elongation. During this step, the ribosome changes from the pre-translocational (PRE) to the post-translocational (POST) state as the newly formed A-site-bound peptidyl-tRNA and P-site-bound deacylated tRNA move to the P and E sites, respectively. Catalyzes the coordinated movement of the two tRNA molecules, the mRNA and conformational changes in the ribosome. This chain is Elongation factor G, found in Leuconostoc citreum (strain KM20).